The chain runs to 210 residues: Probable glutathione S-transferase gst-36 (210 aa).

Residues 2–79 form the GST N-terminal domain; it reads PHFKFYYFDV…YLGHQFHRAG (78 aa). Glutathione is bound by residues Tyr8, Trp39, Lys43, 49–51, and 63–64; these read GQV and QT. The region spanning 81 to 210 is the GST C-terminal domain; it reads NAVDCARLDM…YVSQRKATPA (130 aa).

This sequence belongs to the GST superfamily. Sigma family.

The catalysed reaction is RX + glutathione = an S-substituted glutathione + a halide anion + H(+). Conjugation of reduced glutathione to a wide number of exogenous and endogenous hydrophobic electrophiles. This is Probable glutathione S-transferase gst-36 (gst-36) from Caenorhabditis elegans.